We begin with the raw amino-acid sequence, 179 residues long: Large ribosomal subunit protein uL6 (179 aa).

Belongs to the universal ribosomal protein uL6 family. As to quaternary structure, part of the 50S ribosomal subunit.

Functionally, this protein binds to the 23S rRNA, and is important in its secondary structure. It is located near the subunit interface in the base of the L7/L12 stalk, and near the tRNA binding site of the peptidyltransferase center. The protein is Large ribosomal subunit protein uL6 of Mycobacterium sp. (strain KMS).